A 115-amino-acid polypeptide reads, in one-letter code: U3-lycotoxin-Ls1f (115 aa).

Residues Met1 to Ala20 form the signal peptide. Residues Glu21–Arg44 constitute a propeptide that is removed on maturation. Intrachain disulfides connect Cys48/Cys63, Cys55/Cys72, Cys62/Cys87, and Cys74/Cys85.

Belongs to the neurotoxin 19 (CSTX) family. 01 subfamily. Expressed by the venom gland.

Its subcellular location is the secreted. This is U3-lycotoxin-Ls1f from Lycosa singoriensis (Wolf spider).